Reading from the N-terminus, the 89-residue chain is UPF0237 protein CA_C0478 (89 aa).

Residues 4 to 78 enclose the ACT domain; the sequence is IITVIGKDKV…KKLGVSIKIQ (75 aa).

This sequence belongs to the UPF0237 family.

The chain is UPF0237 protein CA_C0478 from Clostridium acetobutylicum (strain ATCC 824 / DSM 792 / JCM 1419 / IAM 19013 / LMG 5710 / NBRC 13948 / NRRL B-527 / VKM B-1787 / 2291 / W).